Here is a 120-residue protein sequence, read N- to C-terminus: NAD(P)H-quinone oxidoreductase subunit 3, chloroplastic (120 aa).

3 consecutive transmembrane segments (helical) span residues 14–34, 64–84, and 88–108; these read LIISSLIPILAFFISGILAPI, MFALVFVVFDVETVFLYPWAM, and ILGVSVFIEALIFVLILIVGL.

This sequence belongs to the complex I subunit 3 family. As to quaternary structure, NDH is composed of at least 16 different subunits, 5 of which are encoded in the nucleus.

It is found in the plastid. The protein resides in the chloroplast thylakoid membrane. It catalyses the reaction a plastoquinone + NADH + (n+1) H(+)(in) = a plastoquinol + NAD(+) + n H(+)(out). The catalysed reaction is a plastoquinone + NADPH + (n+1) H(+)(in) = a plastoquinol + NADP(+) + n H(+)(out). NDH shuttles electrons from NAD(P)H:plastoquinone, via FMN and iron-sulfur (Fe-S) centers, to quinones in the photosynthetic chain and possibly in a chloroplast respiratory chain. The immediate electron acceptor for the enzyme in this species is believed to be plastoquinone. Couples the redox reaction to proton translocation, and thus conserves the redox energy in a proton gradient. The chain is NAD(P)H-quinone oxidoreductase subunit 3, chloroplastic from Coffea arabica (Arabian coffee).